Here is a 166-residue protein sequence, read N- to C-terminus: UPF0303 protein Avin_29320 (166 aa).

This sequence belongs to the UPF0303 family.

This chain is UPF0303 protein Avin_29320, found in Azotobacter vinelandii (strain DJ / ATCC BAA-1303).